A 494-amino-acid chain; its full sequence is MSTGTFVVSQPLNYRGGARVEPADASGTEKAFEPATGRVIATFTCSGEKEVNLAVQNAKAAFKIWSQKSGMERCRILLEAARIIREREGEIATMECINNGKSIFEARLDINISWQCLEYYAGLAASMAGEHIQLPGGSFGYTRREPLGVCVGIGAWNYPFQITSWKSAPALACGNAMVFKPSPFTPVSALLLAEIYTEAGVPPGLFNVVQGGAATGQFLCQHPDVAKVSFTGSVPTGMKIMEMSAKGIKPVTLELGGKSPLIIFSDCDMNNAVKGALMANFLTQGQVCCNGTRVFVQKEILDKFTEEVVKQTQRIKIGDPLLEDTRMGPLINRPHLERVLGFVKVAKEQGAKVLCGGDIYVPEDPKLKDGYYMRPCVLTNCRDDMTCVKEEIFGPVMSILSFDTEAEVLERANDTTFGLAAGVFTRDIQRAHRVVAELQAGTCFINNYNVSPVELPFGGYKKSGFGRENGRVTIEYYSQLKTVCVEMGDVESAF.

Position 2 is an N-acetylserine (Ser2). N6-acetyllysine; alternate is present on Lys30. Lys30 bears the N6-succinyllysine; alternate mark. N6-succinyllysine is present on Lys59. Residues Lys180 and 232-236 contribute to the NAD(+) site; that span reads GSVPT. The active-site Proton acceptor is Glu254. Cys288 acts as the Nucleophile in catalysis. Lys298 is subject to N6-acetyllysine. Lys303 bears the N6-acetyllysine; alternate mark. N6-succinyllysine; alternate is present on Lys303. Lys344 is modified (N6-acetyllysine). Glu391 contributes to the NAD(+) binding site.

Belongs to the aldehyde dehydrogenase family. In terms of assembly, homotetramer.

Its subcellular location is the cytoplasm. It localises to the cytosol. It catalyses the reaction 4-(trimethylamino)butanal + NAD(+) + H2O = 4-(trimethylamino)butanoate + NADH + 2 H(+). The catalysed reaction is an aldehyde + NAD(+) + H2O = a carboxylate + NADH + 2 H(+). It carries out the reaction 4-aminobutanal + NAD(+) + H2O = 4-aminobutanoate + NADH + 2 H(+). The enzyme catalyses formaldehyde + NAD(+) + H2O = formate + NADH + 2 H(+). It catalyses the reaction acetaldehyde + NAD(+) + H2O = acetate + NADH + 2 H(+). The catalysed reaction is imidazole-4-acetaldehyde + NAD(+) + H2O = imidazole-4-acetate + NADH + 2 H(+). It carries out the reaction acrolein + NAD(+) + H2O = acrylate + NADH + 2 H(+). The enzyme catalyses (5-hydroxyindol-3-yl)acetaldehyde + NAD(+) + H2O = (5-hydroxyindol-3-yl)acetate + NADH + 2 H(+). It catalyses the reaction 3,4-dihydroxyphenylacetaldehyde + NAD(+) + H2O = 3,4-dihydroxyphenylacetate + NADH + 2 H(+). The catalysed reaction is spermine monoaldehyde + NAD(+) + H2O = N-(2-carboxyethyl)spermidine + NADH + 2 H(+). It carries out the reaction propanal + NAD(+) + H2O = propanoate + NADH + 2 H(+). The enzyme catalyses butanal + NAD(+) + H2O = butanoate + NADH + 2 H(+). It catalyses the reaction pentanal + NAD(+) + H2O = pentanoate + NADH + 2 H(+). The catalysed reaction is hexanal + NAD(+) + H2O = hexanoate + NADH + 2 H(+). It participates in amine and polyamine biosynthesis; carnitine biosynthesis. Its function is as follows. Converts gamma-trimethylaminobutyraldehyde into gamma-butyrobetaine with high efficiency (in vitro). Can catalyze the irreversible oxidation of a broad range of aldehydes to the corresponding acids in an NAD-dependent reaction, but with low efficiency. Catalyzes the oxidation of aldehydes arising from biogenic amines and polyamines. In Pongo abelii (Sumatran orangutan), this protein is 4-trimethylaminobutyraldehyde dehydrogenase (ALDH9A1).